Reading from the N-terminus, the 194-residue chain is Isopentenyl-diphosphate Delta-isomerase (194 aa).

Residues histidine 35 and histidine 42 each coordinate Mn(2+). Residues proline 40–aspartate 174 form the Nudix hydrolase domain. The active site involves cysteine 77. Residue histidine 79 coordinates Mn(2+). Position 97 (glutamate 97) interacts with Mg(2+). Mn(2+)-binding residues include glutamate 124 and glutamate 126. The active site involves glutamate 126.

The protein belongs to the IPP isomerase type 1 family. The cofactor is Mg(2+). Requires Mn(2+) as cofactor.

The protein resides in the cytoplasm. It catalyses the reaction isopentenyl diphosphate = dimethylallyl diphosphate. The protein operates within isoprenoid biosynthesis; dimethylallyl diphosphate biosynthesis; dimethylallyl diphosphate from isopentenyl diphosphate: step 1/1. Functionally, catalyzes the 1,3-allylic rearrangement of the homoallylic substrate isopentenyl (IPP) to its highly electrophilic allylic isomer, dimethylallyl diphosphate (DMAPP). In Frankia alni (strain DSM 45986 / CECT 9034 / ACN14a), this protein is Isopentenyl-diphosphate Delta-isomerase.